The sequence spans 292 residues: Ribosomal protein L11 methyltransferase (292 aa).

Residues T144, G165, D187, and N229 each contribute to the S-adenosyl-L-methionine site.

It belongs to the methyltransferase superfamily. PrmA family.

It is found in the cytoplasm. The enzyme catalyses L-lysyl-[protein] + 3 S-adenosyl-L-methionine = N(6),N(6),N(6)-trimethyl-L-lysyl-[protein] + 3 S-adenosyl-L-homocysteine + 3 H(+). Its function is as follows. Methylates ribosomal protein L11. The chain is Ribosomal protein L11 methyltransferase from Pseudomonas fluorescens (strain SBW25).